The chain runs to 151 residues: Large ribosomal subunit protein uL13 (151 aa).

It belongs to the universal ribosomal protein uL13 family. In terms of assembly, part of the 50S ribosomal subunit.

In terms of biological role, this protein is one of the early assembly proteins of the 50S ribosomal subunit, although it is not seen to bind rRNA by itself. It is important during the early stages of 50S assembly. In Nostoc sp. (strain PCC 7120 / SAG 25.82 / UTEX 2576), this protein is Large ribosomal subunit protein uL13.